The chain runs to 191 residues: Adenylate kinase (191 aa).

12-17 (GSGKTT) provides a ligand contact to ATP. Residues 34 to 63 (STGDLLRAESAKKTERGLLIEKFTSQGELV) are NMP. Residues threonine 35, arginine 40, 61 to 63 (ELV), 88 to 91 (GYPR), and glutamine 95 each bind AMP. Positions 130-136 (GRSRGAD) are LID. Arginine 131 contacts ATP. AMP is bound by residues arginine 133 and arginine 145. Arginine 173 provides a ligand contact to ATP.

This sequence belongs to the adenylate kinase family. As to quaternary structure, monomer.

The protein resides in the cytoplasm. The enzyme catalyses AMP + ATP = 2 ADP. It participates in purine metabolism; AMP biosynthesis via salvage pathway; AMP from ADP: step 1/1. In terms of biological role, catalyzes the reversible transfer of the terminal phosphate group between ATP and AMP. Plays an important role in cellular energy homeostasis and in adenine nucleotide metabolism. In Helicobacter pylori (strain G27), this protein is Adenylate kinase.